The following is a 208-amino-acid chain: MEAPPVTTMPVSGGTINMMEYLLQGSILDQGLESLLHRLRGLCDNMEPETFADHESVYLLKGQQASPFVLRARRPLDRPGAPWHLRYLGQPEAGDRSRHTLVRNCVDIATSDVLPEFLQEMGFRMDHEFVARGHLFRKGVMKVAVYKVFRVLVSGAAEGAEPLSLSYLVELSAVAPAGQDNIADEVRGFAEQLRPLVQLEKIDPKRVM.

It belongs to the Mediator complex subunit 18 family. In terms of assembly, component of the Mediator complex.

The protein localises to the nucleus. Its function is as follows. Component of the Mediator complex, a coactivator involved in the regulated transcription of nearly all RNA polymerase II-dependent genes. Mediator functions as a bridge to convey information from gene-specific regulatory proteins to the basal RNA polymerase II transcription machinery. Mediator is recruited to promoters by direct interactions with regulatory proteins and serves as a scaffold for the assembly of a functional preinitiation complex with RNA polymerase II and the general transcription factors. This chain is Mediator of RNA polymerase II transcription subunit 18 (med18), found in Xenopus laevis (African clawed frog).